Consider the following 560-residue polypeptide: Dihydroxy-acid dehydratase (560 aa).

Residues 1–20 are disordered; that stretch reads MGDNLKKRSSMTTDGDNRAP. Residue Cys-52 coordinates [2Fe-2S] cluster. A Mg(2+)-binding site is contributed by Asp-84. Residue Cys-125 coordinates [2Fe-2S] cluster. Asp-126 and Lys-127 together coordinate Mg(2+). Residue Lys-127 is modified to N6-carboxylysine. Cys-197 contributes to the [2Fe-2S] cluster binding site. Mg(2+) is bound at residue Glu-448. Ser-474 (proton acceptor) is an active-site residue.

It belongs to the IlvD/Edd family. In terms of assembly, homodimer. The cofactor is [2Fe-2S] cluster. Mg(2+) serves as cofactor.

It catalyses the reaction (2R)-2,3-dihydroxy-3-methylbutanoate = 3-methyl-2-oxobutanoate + H2O. The catalysed reaction is (2R,3R)-2,3-dihydroxy-3-methylpentanoate = (S)-3-methyl-2-oxopentanoate + H2O. The protein operates within amino-acid biosynthesis; L-isoleucine biosynthesis; L-isoleucine from 2-oxobutanoate: step 3/4. Its pathway is amino-acid biosynthesis; L-valine biosynthesis; L-valine from pyruvate: step 3/4. Functions in the biosynthesis of branched-chain amino acids. Catalyzes the dehydration of (2R,3R)-2,3-dihydroxy-3-methylpentanoate (2,3-dihydroxy-3-methylvalerate) into 2-oxo-3-methylpentanoate (2-oxo-3-methylvalerate) and of (2R)-2,3-dihydroxy-3-methylbutanoate (2,3-dihydroxyisovalerate) into 2-oxo-3-methylbutanoate (2-oxoisovalerate), the penultimate precursor to L-isoleucine and L-valine, respectively. The protein is Dihydroxy-acid dehydratase of Leptospira interrogans serogroup Icterohaemorrhagiae serovar copenhageni (strain Fiocruz L1-130).